A 279-amino-acid polypeptide reads, in one-letter code: Cyanocobalamin reductase / alkylcobalamin dealkylase (279 aa).

Substrate-binding positions include Asp-104, 115–118 (ILAQ), 129–131 (YYQ), Cys-149, and Ile-160. The interval 239-279 (PSEHPSTTSELPLSLLTKPQNSRRARSWLSPSVSPPVSPGP) is disordered. Residues 243 to 257 (PSTTSELPLSLLTKP) show a composition bias toward low complexity. Phosphoserine is present on residues Ser-247, Ser-272, and Ser-276.

Belongs to the MMACHC family. As to quaternary structure, monomer in the absence of bound substrate. Homodimer; dimerization is triggered by binding to FMN or adenosylcobalamin. Interacts with LMBRD1 and ABCD4; the interaction ensures the transport of cobalamin from the lysosome to the cytoplasm. Forms a multiprotein complex with MMADHC, MTR and MTRR; the interaction with MTR could modulate MMACHC-dependent processing of cobalamin. Heterodimer with MMADHC; the interaction might play a role in the regulation of the balance between AdoCbl and MeCbl synthesis. Requires FAD as cofactor. FMN is required as a cofactor. Detected in liver and kidney (at protein level). Detected in embryos.

The protein resides in the cytoplasm. The protein localises to the cytosol. It carries out the reaction 2 cob(II)alamin-[cyanocobalamin reductase] + 2 hydrogen cyanide + NADP(+) = 2 cyanocob(III)alamin + 2 apo-[cyanocobalamin reductase] + NADPH + H(+). It catalyses the reaction apo-[alkylcobalamin reductase] + an R-cob(III)alamin + glutathione = cob(I)alamin-[alkylcobalamin reductase] + an S-substituted glutathione + H(+). The enzyme catalyses apo-[alkylcobalamin reductase] + methylcob(III)alamin + glutathione = S-methyl glutathione + cob(I)alamin-[alkylcobalamin reductase] + H(+). The catalysed reaction is apo-[alkylcobalamin reductase] + adenosylcob(III)alamin + glutathione = S-adenosylglutathione + cob(I)alamin-[alkylcobalamin reductase] + H(+). Functionally, cobalamin (vitamin B12) cytosolic chaperone that catalyzes the reductive decyanation of cyanocob(III)alamin (cyanocobalamin, CNCbl) to yield cob(II)alamin and cyanide, using FAD or FMN as cofactors and NADPH as cosubstrate. Cyanocobalamin constitutes the inactive form of vitamin B12 introduced from the diet, and is converted into the active cofactors methylcobalamin (MeCbl) involved in methionine biosynthesis, and 5'-deoxyadenosylcobalamin (AdoCbl) involved in the TCA cycle. Forms a complex with the lysosomal transporter ABCD4 and its chaperone LMBRD1, to transport cobalamin across the lysosomal membrane into the cytosol. The processing of cobalamin in the cytosol occurs in a multiprotein complex composed of at least MMACHC, MMADHC, MTRR (methionine synthase reductase) and MTR (methionine synthase) which may contribute to shuttle safely and efficiently cobalamin towards MTR in order to produce methionine. Also acts as a glutathione transferase by catalyzing the dealkylation of the alkylcob(III)alamins MeCbl and AdoCbl, using the thiolate of glutathione for nucleophilic displacement to generate cob(I)alamin and the corresponding glutathione thioether. The conversion of incoming MeCbl or AdoCbl into a common intermediate cob(I)alamin is necessary to meet the cellular needs for both cofactors. Cysteine and homocysteine cannot substitute for glutathione in this reaction. The chain is Cyanocobalamin reductase / alkylcobalamin dealkylase from Mus musculus (Mouse).